A 200-amino-acid polypeptide reads, in one-letter code: Small heat shock protein hspG2 (200 aa).

The sHSP domain occupies 33-200 (NKRIDIIPSM…DNFQIKLKSI (168 aa)). The segment at 86–139 (KLQQQQQQQSEKSSQSTNNKDDDEPSIEEYEDDTKLKSNLNKNTENKDENKTTS) is disordered. The span at 88–101 (QQQQQQQSEKSSQS) shows a compositional bias: low complexity. The span at 106-117 (DDDEPSIEEYED) shows a compositional bias: acidic residues.

The protein belongs to the small heat shock protein (HSP20) family.

This is Small heat shock protein hspG2 (hspG2) from Dictyostelium discoideum (Social amoeba).